The sequence spans 184 residues: ATP synthase subunit delta (184 aa).

This sequence belongs to the ATPase delta chain family. As to quaternary structure, F-type ATPases have 2 components, F(1) - the catalytic core - and F(0) - the membrane proton channel. F(1) has five subunits: alpha(3), beta(3), gamma(1), delta(1), epsilon(1). F(0) has three main subunits: a(1), b(2) and c(10-14). The alpha and beta chains form an alternating ring which encloses part of the gamma chain. F(1) is attached to F(0) by a central stalk formed by the gamma and epsilon chains, while a peripheral stalk is formed by the delta and b chains.

Its subcellular location is the cell membrane. F(1)F(0) ATP synthase produces ATP from ADP in the presence of a proton or sodium gradient. F-type ATPases consist of two structural domains, F(1) containing the extramembraneous catalytic core and F(0) containing the membrane proton channel, linked together by a central stalk and a peripheral stalk. During catalysis, ATP synthesis in the catalytic domain of F(1) is coupled via a rotary mechanism of the central stalk subunits to proton translocation. Its function is as follows. This protein is part of the stalk that links CF(0) to CF(1). It either transmits conformational changes from CF(0) to CF(1) or is implicated in proton conduction. This is ATP synthase subunit delta from Wolbachia pipientis subsp. Culex pipiens (strain wPip).